The sequence spans 144 residues: uncharacterized protein (144 aa).

Residues 13–120 (IFCGIVEGNV…VPKYETGLGF (108 aa)) enclose the HIT domain. The Histidine triad motif signature appears at 105 to 109 (HYHMH).

This is an uncharacterized protein from Mycoplasma pneumoniae (strain ATCC 29342 / M129 / Subtype 1) (Mycoplasmoides pneumoniae).